The chain runs to 219 residues: Guanylate kinase (219 aa).

The 180-residue stretch at 15–194 (GLMFVLSSPS…AFESVKAILR (180 aa)) folds into the Guanylate kinase-like domain. 22–29 (SPSGAGKT) is an ATP binding site.

Belongs to the guanylate kinase family.

The protein resides in the cytoplasm. It carries out the reaction GMP + ATP = GDP + ADP. Essential for recycling GMP and indirectly, cGMP. This is Guanylate kinase from Rhodopseudomonas palustris (strain BisB5).